The sequence spans 338 residues: Fructose-1,6-bisphosphatase class 1 (338 aa).

Mg(2+) is bound by residues Glu-92, Asp-113, Leu-115, and Asp-116. Substrate is bound by residues 116-119 (DGSS), Asn-208, and Lys-274. Glu-280 lines the Mg(2+) pocket.

It belongs to the FBPase class 1 family. Homotetramer. Mg(2+) serves as cofactor.

The protein localises to the cytoplasm. The catalysed reaction is beta-D-fructose 1,6-bisphosphate + H2O = beta-D-fructose 6-phosphate + phosphate. It functions in the pathway carbohydrate biosynthesis; gluconeogenesis. The protein is Fructose-1,6-bisphosphatase class 1 of Paramagnetospirillum magneticum (strain ATCC 700264 / AMB-1) (Magnetospirillum magneticum).